A 129-amino-acid polypeptide reads, in one-letter code: Small ribosomal subunit protein uS11 (129 aa).

This sequence belongs to the universal ribosomal protein uS11 family. In terms of assembly, part of the 30S ribosomal subunit. Interacts with proteins S7 and S18. Binds to IF-3.

Its function is as follows. Located on the platform of the 30S subunit, it bridges several disparate RNA helices of the 16S rRNA. Forms part of the Shine-Dalgarno cleft in the 70S ribosome. The polypeptide is Small ribosomal subunit protein uS11 (Brucella abortus (strain S19)).